The sequence spans 394 residues: S-adenosylmethionine synthase (394 aa).

Residue histidine 18 coordinates ATP. Aspartate 20 contributes to the Mg(2+) binding site. Residue glutamate 46 coordinates K(+). 2 residues coordinate L-methionine: glutamate 59 and glutamine 102. The flexible loop stretch occupies residues 102 to 112 (QSPDIDMGVSA). ATP-binding positions include 175–177 (DGK), aspartate 250, 256–257 (RK), alanine 273, and lysine 277. Position 250 (aspartate 250) interacts with L-methionine. Lysine 281 provides a ligand contact to L-methionine.

Belongs to the AdoMet synthase family. Homotetramer; dimer of dimers. Requires Mg(2+) as cofactor. K(+) serves as cofactor.

The protein resides in the cytoplasm. It catalyses the reaction L-methionine + ATP + H2O = S-adenosyl-L-methionine + phosphate + diphosphate. It functions in the pathway amino-acid biosynthesis; S-adenosyl-L-methionine biosynthesis; S-adenosyl-L-methionine from L-methionine: step 1/1. Functionally, catalyzes the formation of S-adenosylmethionine (AdoMet) from methionine and ATP. The overall synthetic reaction is composed of two sequential steps, AdoMet formation and the subsequent tripolyphosphate hydrolysis which occurs prior to release of AdoMet from the enzyme. The sequence is that of S-adenosylmethionine synthase from Brachyspira hyodysenteriae (strain ATCC 49526 / WA1).